Here is a 735-residue protein sequence, read N- to C-terminus: MRVKSVYKKLSVSFILVMLSASQEVNSQAKVSVNLNVKHVVGGISEFDRTKYITIHANQIENEWDGDNFTSDLRDHFLNGFDVYLGRDTGGITWNLNNMQEDASRPGFANPSNIISKGINTRNNYASKTHLHVYENRKSNHVVAAQLHPFWTGESQIATKGTGWELASPTATGEYMGRYFNEFYGGNGEPVPSWIEVINEPAYEALGGKKNFTNSLQEIADFHVEVADAIRVQNPNLKIGGYTAAFPDFETGDFQRWINRDKLFIDVAGEKMDFWSWHLYDFPVIGGKEDIRSGSNVEATFDMHDHYSMLKLGHKKPYVISEYGAQTHDFRNEGWSSYRDWLFVRAQNSLMMSFMERPEDIAMAIPFTIVKAEWGFNTDKNLPYPARLMRKANEPESYTGEWVYTDRVKFYDLWKNVKGTRIDTKSTDLDIQVDAYVDGNKGYLILNNLESEETEITLDVFEKYDSSITNILKRHLTLSSNNVVIEEETFSSSISTVQLGAGSTMILEYTFANSLTIDETSTEEKYYADSYLQPIVASQPILFAVNNVVKSATYGEAVLRLGLGRDHGKSLKPIVKVNNTEVVVPDDWRGYDQADKGRFFGTIEIPVSYDLLTTNNTVSVEFPDSSGHVSSVIMQVFNFSSDIRTLSVNDVTASDTKTLLISPNPVKDGMLNMTIPAKLKNPIASIYNVSGSLLIKQSMKHSQTSIPVNLFDKGVYLLVLQDGSKKIGESKFVIQ.

The first 27 residues, 1-27, serve as a signal peptide directing secretion; it reads MRVKSVYKKLSVSFILVMLSASQEVNS. The active-site Proton donor is E200. The active-site Nucleophile is E322.

Belongs to the glycosyl hydrolase 86 family.

The enzyme catalyses Endohydrolysis of beta-(1-&gt;4)-linkages between beta-D-galactopyranose-6-sulfate and 3,6-anhydro-alpha-L-galactopyranose units in funoran.. It carries out the reaction Hydrolysis of (1-&gt;4)-beta-D-galactosidic linkages in agarose, giving the tetramer as the predominant product.. Its activity is regulated as follows. Agarase activity is enhanced in the presence of NaCl. Agarase activity is significantly inhibited by Zn(2+) and slightly activated by several divalent ions including Mg(2+), Cd(2+) and Ca(2+). Functionally, endohydrolase that cleaves the beta-1,4 glycosidic bond between beta-D-galactopyranose-6-sulfate (G6S) and 3,6-anhydro-alpha-L-galactopyranose (LA) unit of funoran, a polysaccharide produced by red algae of the genus Gloiopeltis. It releases the disaccharide LA-G6S as the predominant end product. Also acts as a random endo-acting beta-agarase, which can hydrolyze agarose tetrasaccharides and hexasaccharides, and produces disaccharides as smallest products. Besides typical agarose oligosaccharides, it can use methylated galactoses. The enzyme exhibits higher catalytic efficiency towards agarose, but binds funoran preferentially. Has no activity on porphyran. In Wenyingzhuangia aestuarii, this protein is Funoran endo-beta-hydrolase.